The chain runs to 129 residues: Small ribosomal subunit protein uS11 (129 aa).

Belongs to the universal ribosomal protein uS11 family. As to quaternary structure, part of the 30S ribosomal subunit. Interacts with proteins S7 and S18. Binds to IF-3.

In terms of biological role, located on the platform of the 30S subunit, it bridges several disparate RNA helices of the 16S rRNA. Forms part of the Shine-Dalgarno cleft in the 70S ribosome. In Halalkalibacterium halodurans (strain ATCC BAA-125 / DSM 18197 / FERM 7344 / JCM 9153 / C-125) (Bacillus halodurans), this protein is Small ribosomal subunit protein uS11.